The following is a 332-amino-acid chain: Cytochrome c1, heme protein, mitochondrial (332 aa).

A mitochondrion-targeting transit peptide spans 1 to 70 (MLARTCLRST…YYHLYGFASA (70 aa)). Over 71–277 (MTPAEEGLHA…AEPEMDDRKR (207 aa)) the chain is Mitochondrial intermembrane. The Cytochrome c domain maps to 97–250 (QALRRGFQVY…GLVDYEDGTP (154 aa)). Heme c-binding residues include cysteine 110, cysteine 113, and histidine 114. Over residues 139–151 (EENEYDTEPNDQG) the composition is skewed to acidic residues. A disordered region spans residues 139-162 (EENEYDTEPNDQGEIEKRPGKLSD). Residue methionine 234 coordinates heme c. The chain crosses the membrane as a helical span at residues 278-296 (MGMKVLVVTSVLFALSVYV). Residues 297 to 332 (KRYKWAWLKSRKIVYDPPKSPPPATNLALPQQRAKS) are Mitochondrial matrix-facing.

Belongs to the cytochrome c family. Component of the ubiquinol-cytochrome c oxidoreductase (cytochrome b-c1 complex, complex III, CIII), a multisubunit enzyme composed of 10 subunits. The complex is composed of 3 respiratory subunits cytochrome b (cob), cytochrome c1 (cyt-1) and Rieske protein (fes-1), 2 core protein subunits pep and ucr-1, and 5 low-molecular weight protein subunits qcr6, qcr7, qcr8, qcr9 and probably NCU16844/qcr10. The complex exists as an obligatory dimer and forms supercomplexes (SCs) in the inner mitochondrial membrane with NADH-ubiquinone oxidoreductase (complex I, CI) and cytochrome c oxidase (complex IV, CIV), resulting in different assemblies (supercomplexes SCI(1)III(2), SCIII(2)IV(1) and SCIII(2)IV(2) as well as higher order I(x)III(y)IV(z) megacomplexes). It depends on heme c as a cofactor.

The protein localises to the mitochondrion inner membrane. The enzyme catalyses a quinol + 2 Fe(III)-[cytochrome c](out) = a quinone + 2 Fe(II)-[cytochrome c](out) + 2 H(+)(out). Component of the ubiquinol-cytochrome c oxidoreductase, a multisubunit transmembrane complex that is part of the mitochondrial electron transport chain which drives oxidative phosphorylation. The respiratory chain contains 3 multisubunit complexes succinate dehydrogenase (complex II, CII), ubiquinol-cytochrome c oxidoreductase (cytochrome b-c1 complex, complex III, CIII) and cytochrome c oxidase (complex IV, CIV), that cooperate to transfer electrons derived from NADH and succinate to molecular oxygen, creating an electrochemical gradient over the inner membrane that drives transmembrane transport and the ATP synthase. The cytochrome b-c1 complex catalyzes electron transfer from ubiquinol to cytochrome c, linking this redox reaction to translocation of protons across the mitochondrial inner membrane, with protons being carried across the membrane as hydrogens on the quinol. In the process called Q cycle, 2 protons are consumed from the matrix, 4 protons are released into the intermembrane space and 2 electrons are passed to cytochrome c. Cytochrome c1 is a catalytic core subunit containing a c-type heme. It transfers electrons from the [2Fe-2S] iron-sulfur cluster of the Rieske protein to cytochrome c. The chain is Cytochrome c1, heme protein, mitochondrial (cyt-1) from Neurospora crassa (strain ATCC 24698 / 74-OR23-1A / CBS 708.71 / DSM 1257 / FGSC 987).